Here is a 184-residue protein sequence, read N- to C-terminus: GTP cyclohydrolase 1 (184 aa).

Positions 74, 77, and 145 each coordinate Zn(2+).

This sequence belongs to the GTP cyclohydrolase I family. In terms of assembly, toroid-shaped homodecamer, composed of two pentamers of five dimers.

The catalysed reaction is GTP + H2O = 7,8-dihydroneopterin 3'-triphosphate + formate + H(+). The protein operates within cofactor biosynthesis; 7,8-dihydroneopterin triphosphate biosynthesis; 7,8-dihydroneopterin triphosphate from GTP: step 1/1. In Aquifex aeolicus (strain VF5), this protein is GTP cyclohydrolase 1 (folE).